A 617-amino-acid chain; its full sequence is Chaperone protein HscA homolog (617 aa).

This sequence belongs to the heat shock protein 70 family.

Functionally, chaperone involved in the maturation of iron-sulfur cluster-containing proteins. Has a low intrinsic ATPase activity which is markedly stimulated by HscB. The polypeptide is Chaperone protein HscA homolog (Actinobacillus pleuropneumoniae serotype 5b (strain L20)).